A 247-amino-acid polypeptide reads, in one-letter code: tRNA uridine(34) hydroxylase (247 aa).

The Rhodanese domain occupies 124–218; sequence TQQDVIVIDT…YLEDTQNKNN (95 aa). Cysteine 178 serves as the catalytic Cysteine persulfide intermediate.

This sequence belongs to the TrhO family.

The catalysed reaction is uridine(34) in tRNA + AH2 + O2 = 5-hydroxyuridine(34) in tRNA + A + H2O. Its function is as follows. Catalyzes oxygen-dependent 5-hydroxyuridine (ho5U) modification at position 34 in tRNAs. The chain is tRNA uridine(34) hydroxylase from Rickettsia conorii (strain ATCC VR-613 / Malish 7).